The sequence spans 297 residues: Streptogrisin-A (297 aa).

The first 38 residues, 1–38 (MTFKRFSPLSSTSRYARLLAVASGLVAAAALATPSAVA), serve as a signal peptide directing secretion. The propeptide occupies 39–115 (APEAESKATV…VKRAEGKFTP (77 aa)). A disulfide bond links cysteine 130 and cysteine 150. Catalysis depends on charge relay system residues histidine 149, aspartate 171, and serine 253. Cysteine 247 and cysteine 274 are joined by a disulfide.

It belongs to the peptidase S1 family. Monomer.

It catalyses the reaction Hydrolysis of proteins with specificity similar to chymotrypsin.. In terms of biological role, has a primary specificity for large aliphatic or aromatic amino acids. The sequence is that of Streptogrisin-A (sprA) from Streptomyces griseus.